The chain runs to 154 residues: Cyclin-dependent protein kinase inhibitor SMR14 (154 aa).

The disordered stretch occupies residues 1–111 (MSKIKIFHLF…RPPRKPKAIP (111 aa)). Residues 24-37 (SLLVPSKSDSLDSS) show a composition bias toward low complexity. The segment covering 74-83 (KWECKDEESP) has biased composition (basic and acidic residues).

In terms of biological role, probable cyclin-dependent protein kinase (CDK) inhibitor that functions as a repressor of mitosis in the endoreduplication cell cycle. The sequence is that of Cyclin-dependent protein kinase inhibitor SMR14 from Arabidopsis thaliana (Mouse-ear cress).